The chain runs to 462 residues: Trigger factor (462 aa).

A PPIase FKBP-type domain is found at 163–259 (TDYVNIDLQR…VNDVKRRDLP (97 aa)). The disordered stretch occupies residues 439 to 462 (SREEFEEEMQQQQQQQAQRQRMAP). Residues 448–462 (QQQQQQQAQRQRMAP) show a composition bias toward low complexity.

Belongs to the FKBP-type PPIase family. Tig subfamily.

The protein localises to the cytoplasm. The enzyme catalyses [protein]-peptidylproline (omega=180) = [protein]-peptidylproline (omega=0). In terms of biological role, involved in protein export. Acts as a chaperone by maintaining the newly synthesized protein in an open conformation. Functions as a peptidyl-prolyl cis-trans isomerase. The protein is Trigger factor of Salinibacter ruber (strain DSM 13855 / M31).